A 359-amino-acid chain; its full sequence is Tropomodulin-1 (359 aa).

A disordered region spans residues 36–61 (ELDPDNALLPAGLRQKDQTTKAPTGP). The interval 39–138 (PDNALLPAGL…CDIAAILGMH (100 aa)) is tropomyosin-binding.

It belongs to the tropomodulin family. As to quaternary structure, binds to the N-terminus of tropomyosin and to actin. Interacts with FLII. In terms of tissue distribution, highly expressed in the erythrocyte, heart and skeletal muscle.

Its subcellular location is the cytoplasm. The protein localises to the cytoskeleton. In terms of biological role, blocks the elongation and depolymerization of the actin filaments at the pointed end. The Tmod/TM complex contributes to the formation of the short actin protofilament, which in turn defines the geometry of the membrane skeleton. The chain is Tropomodulin-1 (Tmod1) from Mus musculus (Mouse).